The following is a 367-amino-acid chain: MTASQRTLMVMAGGTGGHVFPGLAVAHRMEAAGWRVVWLGNPAGMEATLVPKHGIPMEYVRFGGLRGKGLKTKLTLPVNLLRACWQSLGALRRVRPDVVLGMGGYITFPAGVMTALSGRPLVLHEQNSIAGLTNKVLAKLAKRVLVAFPGALPHAEWTGNPIRAELARTEPPQARYASRSGPLNVLVVGGSLGAAALNEVVPRALALLAPGERPRVVHQAGVKHIEALKANYEAAGFAAGEGVRLVPFIDDMAAAYAAADLVICRSGAMTVSEIAAVGVAALFVPFPYAVDDHQTTNAAFLADAGAAVLVQQRDLSAELLADWLRGQSRASLAAMAERSRTLAKPEATDEVARVCAKAAGANLEILQ.

UDP-N-acetyl-alpha-D-glucosamine-binding positions include 15 to 17, Asn-127, Arg-163, Ser-191, Ile-249, and Gln-294; that span reads TGG.

Belongs to the glycosyltransferase 28 family. MurG subfamily.

It is found in the cell inner membrane. It catalyses the reaction di-trans,octa-cis-undecaprenyl diphospho-N-acetyl-alpha-D-muramoyl-L-alanyl-D-glutamyl-meso-2,6-diaminopimeloyl-D-alanyl-D-alanine + UDP-N-acetyl-alpha-D-glucosamine = di-trans,octa-cis-undecaprenyl diphospho-[N-acetyl-alpha-D-glucosaminyl-(1-&gt;4)]-N-acetyl-alpha-D-muramoyl-L-alanyl-D-glutamyl-meso-2,6-diaminopimeloyl-D-alanyl-D-alanine + UDP + H(+). The protein operates within cell wall biogenesis; peptidoglycan biosynthesis. Functionally, cell wall formation. Catalyzes the transfer of a GlcNAc subunit on undecaprenyl-pyrophosphoryl-MurNAc-pentapeptide (lipid intermediate I) to form undecaprenyl-pyrophosphoryl-MurNAc-(pentapeptide)GlcNAc (lipid intermediate II). In Burkholderia orbicola (strain MC0-3), this protein is UDP-N-acetylglucosamine--N-acetylmuramyl-(pentapeptide) pyrophosphoryl-undecaprenol N-acetylglucosamine transferase.